The primary structure comprises 343 residues: SUMO-activating enzyme subunit aos-1 (343 aa).

This sequence belongs to the ubiquitin-activating E1 family. As to quaternary structure, heterodimer of aos-1 and uba-2.

Its pathway is protein modification; protein sumoylation. The dimeric enzyme acts as an E1 ligase for smo-1. It mediates ATP-dependent activation of smo-1 and formation of a thioester with a conserved cysteine residue on uba-2. The chain is SUMO-activating enzyme subunit aos-1 (aos-1) from Caenorhabditis elegans.